The primary structure comprises 194 residues: Flagellar transcriptional regulator FlhC (194 aa).

Zn(2+) contacts are provided by C139, C142, C159, and C162.

The protein belongs to the FlhC family. In terms of assembly, heterohexamer composed of two FlhC and four FlhD subunits. Each FlhC binds a FlhD dimer, forming a heterotrimer, and a hexamer assembles by dimerization of two heterotrimers. The cofactor is Zn(2+).

It is found in the cytoplasm. In terms of biological role, functions in complex with FlhD as a master transcriptional regulator that regulates transcription of several flagellar and non-flagellar operons by binding to their promoter region. Activates expression of class 2 flagellar genes, including fliA, which is a flagellum-specific sigma factor that turns on the class 3 genes. Also regulates genes whose products function in a variety of physiological pathways. The sequence is that of Flagellar transcriptional regulator FlhC from Xenorhabdus nematophila (Achromobacter nematophilus).